Here is a 338-residue protein sequence, read N- to C-terminus: MPIFTAQELAERFNLQLFGDGNIRIHGVATLAQASPEQLSFLANPRYLTQLLNSRAGVIVLHADDVKAASGTVLIAKDPYVTFAKIATLFDIKPAREAGIHPLATVDPSAHVSPTAHVGAFVSIGARSSIGASCIIGTGSIIGDDCTIDDGSELIARVTLISRVRLGKRVRIHPGAVLGGEGFGLAMESGHWIKIPQLGGVVIGDDCEIGANSCIDRGALDDTVLEEDVHIDNLVQIAHNCRIGAHTAIAGCTGIAGSAKIGRYCLLGGHVGVVGHLQICDNVVITGKSVVRNSIHTPGEYSSGTPLTDNRTWRKNAVRFKQLDMLVRRMMAVSKEKA.

His-239 functions as the Proton acceptor in the catalytic mechanism.

It belongs to the transferase hexapeptide repeat family. LpxD subfamily. Homotrimer.

The catalysed reaction is a UDP-3-O-[(3R)-3-hydroxyacyl]-alpha-D-glucosamine + a (3R)-hydroxyacyl-[ACP] = a UDP-2-N,3-O-bis[(3R)-3-hydroxyacyl]-alpha-D-glucosamine + holo-[ACP] + H(+). Its pathway is bacterial outer membrane biogenesis; LPS lipid A biosynthesis. Functionally, catalyzes the N-acylation of UDP-3-O-acylglucosamine using 3-hydroxyacyl-ACP as the acyl donor. Is involved in the biosynthesis of lipid A, a phosphorylated glycolipid that anchors the lipopolysaccharide to the outer membrane of the cell. In Xylella fastidiosa (strain M12), this protein is UDP-3-O-acylglucosamine N-acyltransferase.